Consider the following 352-residue polypeptide: Holliday junction branch migration complex subunit RuvB (352 aa).

The tract at residues 4–185 (ADRLIAATGP…FGIVQRLEFY (182 aa)) is large ATPase domain (RuvB-L). ATP-binding positions include Ile24, Arg25, Gly66, Lys69, Thr70, Thr71, 132–134 (EDF), Arg175, Tyr185, and Arg222. Position 70 (Thr70) interacts with Mg(2+). Residues 186–256 (STADLATIVS…VADLALNLLD (71 aa)) are small ATPAse domain (RuvB-S). The head domain (RuvB-H) stretch occupies residues 259–352 (EHGFDHQDRR…VDEFLDAVDD (94 aa)). DNA contacts are provided by Arg295, Arg314, and Arg319.

This sequence belongs to the RuvB family. In terms of assembly, homohexamer. Forms an RuvA(8)-RuvB(12)-Holliday junction (HJ) complex. HJ DNA is sandwiched between 2 RuvA tetramers; dsDNA enters through RuvA and exits via RuvB. An RuvB hexamer assembles on each DNA strand where it exits the tetramer. Each RuvB hexamer is contacted by two RuvA subunits (via domain III) on 2 adjacent RuvB subunits; this complex drives branch migration. In the full resolvosome a probable DNA-RuvA(4)-RuvB(12)-RuvC(2) complex forms which resolves the HJ.

It is found in the cytoplasm. The enzyme catalyses ATP + H2O = ADP + phosphate + H(+). Its function is as follows. The RuvA-RuvB-RuvC complex processes Holliday junction (HJ) DNA during genetic recombination and DNA repair, while the RuvA-RuvB complex plays an important role in the rescue of blocked DNA replication forks via replication fork reversal (RFR). RuvA specifically binds to HJ cruciform DNA, conferring on it an open structure. The RuvB hexamer acts as an ATP-dependent pump, pulling dsDNA into and through the RuvAB complex. RuvB forms 2 homohexamers on either side of HJ DNA bound by 1 or 2 RuvA tetramers; 4 subunits per hexamer contact DNA at a time. Coordinated motions by a converter formed by DNA-disengaged RuvB subunits stimulates ATP hydrolysis and nucleotide exchange. Immobilization of the converter enables RuvB to convert the ATP-contained energy into a lever motion, pulling 2 nucleotides of DNA out of the RuvA tetramer per ATP hydrolyzed, thus driving DNA branch migration. The RuvB motors rotate together with the DNA substrate, which together with the progressing nucleotide cycle form the mechanistic basis for DNA recombination by continuous HJ branch migration. Branch migration allows RuvC to scan DNA until it finds its consensus sequence, where it cleaves and resolves cruciform DNA. In Pseudomonas fluorescens (strain SBW25), this protein is Holliday junction branch migration complex subunit RuvB.